The primary structure comprises 200 residues: MLTEKQEAILDYIRSVQAQRGVPPSTREIQRHFGYESQNAAMNHLRALARKGQLHQVDGATWGLKVSEVQGHFELPIYGTIPAGVPSMQEQQPKETITFDPAVFRLRRPERLWGLEVHGDSMIDAHILDGDIAVLERREAKPGDIVAALVDETTTTLKRLAYVKGKPVLKPENARYALIVPKDRLEIQGVFVGLIGRAKR.

Residues Ser121 and Lys158 each act as for autocatalytic cleavage activity in the active site.

Belongs to the peptidase S24 family. Homodimer.

The enzyme catalyses Hydrolysis of Ala-|-Gly bond in repressor LexA.. In terms of biological role, binds a consensus sequence 5'-TGTTC-N(4)-GAACA-3'; some genes have a tandem consensus sequence and their binding is cooperative. Binds to the promoters of a number of genes, including lexA and splB. Represses a number of genes involved in the response to DNA damage (SOS response). In Opitutus terrae (strain DSM 11246 / JCM 15787 / PB90-1), this protein is LexA repressor.